The following is a 257-amino-acid chain: NAD kinase (257 aa).

The active-site Proton acceptor is the Asp46. NAD(+) is bound by residues 46-47 (DG), 116-117 (NE), Asp146, Ala154, and 157-162 (TAYNLS).

This sequence belongs to the NAD kinase family. A divalent metal cation is required as a cofactor.

The protein resides in the cytoplasm. The catalysed reaction is NAD(+) + ATP = ADP + NADP(+) + H(+). Its function is as follows. Involved in the regulation of the intracellular balance of NAD and NADP, and is a key enzyme in the biosynthesis of NADP. Catalyzes specifically the phosphorylation on 2'-hydroxyl of the adenosine moiety of NAD to yield NADP. This is NAD kinase from Mesorhizobium japonicum (strain LMG 29417 / CECT 9101 / MAFF 303099) (Mesorhizobium loti (strain MAFF 303099)).